The primary structure comprises 368 residues: tRNA(Met) cytidine acetate ligase (368 aa).

ATP contacts are provided by residues 7–20, G96, N152, and R175; that span reads IAEF…HKYL.

The protein belongs to the TmcAL family.

Its subcellular location is the cytoplasm. The catalysed reaction is cytidine(34) in elongator tRNA(Met) + acetate + ATP = N(4)-acetylcytidine(34) in elongator tRNA(Met) + AMP + diphosphate. Catalyzes the formation of N(4)-acetylcytidine (ac(4)C) at the wobble position of elongator tRNA(Met), using acetate and ATP as substrates. First activates an acetate ion to form acetyladenylate (Ac-AMP) and then transfers the acetyl group to tRNA to form ac(4)C34. In Streptococcus pyogenes serotype M4 (strain MGAS10750), this protein is tRNA(Met) cytidine acetate ligase.